The sequence spans 135 residues: Holo-[acyl-carrier-protein] synthase (135 aa).

Residues Asp-9 and Glu-63 each coordinate Mg(2+).

Belongs to the P-Pant transferase superfamily. AcpS family. The cofactor is Mg(2+).

Its subcellular location is the cytoplasm. It catalyses the reaction apo-[ACP] + CoA = holo-[ACP] + adenosine 3',5'-bisphosphate + H(+). Its function is as follows. Transfers the 4'-phosphopantetheine moiety from coenzyme A to a Ser of acyl-carrier-protein. This is Holo-[acyl-carrier-protein] synthase from Paraburkholderia phymatum (strain DSM 17167 / CIP 108236 / LMG 21445 / STM815) (Burkholderia phymatum).